A 1099-amino-acid chain; its full sequence is DNA-directed RNA polymerase subunit beta (1099 aa).

The protein belongs to the RNA polymerase beta chain family. In plastids the minimal PEP RNA polymerase catalytic core is composed of four subunits: alpha, beta, beta', and beta''. When a (nuclear-encoded) sigma factor is associated with the core the holoenzyme is formed, which can initiate transcription.

The protein localises to the plastid. It localises to the chloroplast. The enzyme catalyses RNA(n) + a ribonucleoside 5'-triphosphate = RNA(n+1) + diphosphate. Functionally, DNA-dependent RNA polymerase catalyzes the transcription of DNA into RNA using the four ribonucleoside triphosphates as substrates. The polypeptide is DNA-directed RNA polymerase subunit beta (Bigelowiella natans (Pedinomonas minutissima)).